The primary structure comprises 65 residues: DNA-directed RNA polymerase subunit omega (65 aa).

It belongs to the RNA polymerase subunit omega family. The RNAP catalytic core consists of 2 alpha, 1 beta, 1 beta' and 1 omega subunit. When a sigma factor is associated with the core the holoenzyme is formed, which can initiate transcription.

The catalysed reaction is RNA(n) + a ribonucleoside 5'-triphosphate = RNA(n+1) + diphosphate. Its function is as follows. Promotes RNA polymerase assembly. Latches the N- and C-terminal regions of the beta' subunit thereby facilitating its interaction with the beta and alpha subunits. The polypeptide is DNA-directed RNA polymerase subunit omega (Baumannia cicadellinicola subsp. Homalodisca coagulata).